We begin with the raw amino-acid sequence, 499 residues long: Cytochrome P450 705A12 (499 aa).

The helical transmembrane segment at 4-24 threads the bilayer; that stretch reads LIIVDFQNISIFILLCLFSFL. A heme-binding site is contributed by cysteine 439.

This sequence belongs to the cytochrome P450 family. It depends on heme as a cofactor.

It localises to the membrane. Functionally, may be involved in hydroxylation of the triterpene marneral. This Arabidopsis thaliana (Mouse-ear cress) protein is Cytochrome P450 705A12.